We begin with the raw amino-acid sequence, 658 residues long: MSDDMSMGLPSSAGEHGVLRSMQEVAMSSQEASKMLRTYNIAWWGNNYYDVNELGHISVCPDPDVPEARVDLAQLVKTREAQGQRLPALFCFPQILQHRLRSINAAFKRARESYGYNGDYFLVYPIKVNQHRRVIESLIHSGEPLGLEAGSKAELMAVLAHAGMTRSVIVCNGYKDREYIRLALIGEKMGHKVYLVIEKMSEIAIVLDEAERLNVVPRLGVRARLASQGSGKWQSSGGEKSKFGLAATQVLQLVETLREAGRLDSLQLLHFHLGSQMANIRDIATGVRESARFYVELHKLGVNIQCFDVGGGLGVDYEGTRSQSDCSVNYGLNEYANNIIWAIGDACEENGLPHPTVITESGRAVTAHHTVLVSNIIGVERNEYTVPTAPAEDAPRALQSMWETWQEMHEPGTRRSLREWLHDSQMDLHDIHIGYSSGIFSLQERAWAEQLYLSMCHEVQKQLDPQNRAHRPIIDELQERMADKMYVNFSLFQSMPDAWGIDQLFPVLPLEGLDQVPERRAVLLDITCDSDGAIDHYIDGDGIATTMPMPEYDPENPPMLGFFMVGAYQEILGNMHNLFGDTEAVDVFVFPDGSVEVELSDEGDTVADMLQYVQLDPKTLLTQFRDQVKKTDLDAELQQQFLEEFEAGLYGYTYLEDE.

Lys-127 bears the N6-(pyridoxal phosphate)lysine mark. Substrate is bound at residue Phe-307–Tyr-317.

It belongs to the Orn/Lys/Arg decarboxylase class-II family. SpeA subfamily. In terms of assembly, homotetramer. The cofactor is pyridoxal 5'-phosphate. Mg(2+) serves as cofactor. Processed post-translationally to a 70 kDa mature form. Post-translationally, the N-terminus is blocked.

The protein localises to the periplasm. The enzyme catalyses L-arginine + H(+) = agmatine + CO2. The protein operates within amine and polyamine biosynthesis; agmatine biosynthesis; agmatine from L-arginine: step 1/1. With respect to regulation, down-regulated by polyamine end products putrescine and spermidine. Catalyzes the biosynthesis of agmatine from arginine. The chain is Biosynthetic arginine decarboxylase (speA) from Escherichia coli (strain K12).